Reading from the N-terminus, the 699-residue chain is Extracellular matrix protein 2 (699 aa).

Positions 1-20 (MKIAVLFCFFLLIIFQTDFG) are cleaved as a signal peptide. Positions 101–158 (GHCLVKGITMYNKAVWSPEPCTTCLCSDGRVLCDETMCHPQRCPQTVIPEGECCPVCS) constitute a VWFC domain. Positions 176 to 186 (EFSGDSSEQRE) are enriched in basic and acidic residues. A disordered region spans residues 176–316 (EFSGDSSEQR…PAPPRGTLRL (141 aa)). Residues 212–224 (QSEEDEEVKEEDT) are compositionally biased toward acidic residues. Residues 243-260 (GDSRGGDRKQRPGEERRL) show a composition bias toward basic and acidic residues. Acidic residues predominate over residues 270 to 291 (EEEEDEEEEGEEGEEDEEDEED). A Cell attachment site motif is present at residues 294 to 296 (RGD). An LRRNT domain is found at 307-344 (PAPPRGTLRLPSGCSLSYRTISCINAMLTQIPPLTAPQ). LRR repeat units follow at residues 368–388 (NLER…GPKA), 394–415 (KLMR…LPST), 416–436 (LEEL…SLSD), 439–459 (QLVT…NPLA), 465–484 (SLAY…QGLP), 486–507 (SIEE…CFNH), 510–530 (KINV…APLA), 536–557 (NLES…LPKS), 558–578 (LLHL…VFGH), 582–602 (GLEY…DRVS), 609–630 (SLRE…IQEM), 632–653 (ALHF…EICN), and 661–684 (NLEH…TFSC). N-linked (GlcNAc...) asparagine glycosylation is present at N378. N-linked (GlcNAc...) asparagine glycosylation is present at N449. A glycan (N-linked (GlcNAc...) asparagine) is linked at N506.

The protein belongs to the small leucine-rich proteoglycan (SLRP) family. SLRP class I subfamily. As to quaternary structure, interacts with numerous extracellular matrix proteins. Interacts with MSL1 and RASSF1. Expressed predominantly in adipose tissue as well as female-specific organs such as mammary gland, ovary, and uterus.

Its subcellular location is the secreted. It localises to the extracellular space. The protein resides in the extracellular matrix. Its function is as follows. Promotes matrix assembly and cell adhesiveness. This is Extracellular matrix protein 2 (ECM2) from Homo sapiens (Human).